The sequence spans 175 residues: Cytochrome c homolog (175 aa).

Over 1–8 (MSGKELNK) the chain is Cytoplasmic. The chain crosses the membrane as a helical; Signal-anchor span at residues 9 to 29 (IVAAILFASLIAMMVGFVANI). Topologically, residues 30-175 (LYKPTLELQH…LFLKTYVHDK (146 aa)) are periplasmic. Heme c-binding residues include Cys-84, Cys-87, His-88, and Met-150.

Belongs to the cytochrome c family. In terms of processing, binds 1 heme c group covalently per subunit.

It localises to the cell membrane. May be involved in electron transfer from bc1 complex to aa3. The chain is Cytochrome c homolog (cycM) from Rickettsia felis (strain ATCC VR-1525 / URRWXCal2) (Rickettsia azadi).